The primary structure comprises 576 residues: Adenine deaminase (576 aa).

It belongs to the metallo-dependent hydrolases superfamily. Adenine deaminase family. The cofactor is Mn(2+).

The catalysed reaction is adenine + H2O + H(+) = hypoxanthine + NH4(+). In Bacillus pumilus (strain SAFR-032), this protein is Adenine deaminase.